The following is a 772-amino-acid chain: Polyribonucleotide nucleotidyltransferase (772 aa).

Positions 488 and 494 each coordinate Mg(2+). The 60-residue stretch at Pro-555–Ile-614 folds into the KH domain. One can recognise an S1 motif domain in the interval Gly-624 to Lys-692. A disordered region spans residues Ser-690–Glu-772. The span at Tyr-703–Pro-740 shows a compositional bias: basic and acidic residues. The segment covering Asn-743–Pro-757 has biased composition (low complexity).

This sequence belongs to the polyribonucleotide nucleotidyltransferase family. The cofactor is Mg(2+).

Its subcellular location is the cytoplasm. The catalysed reaction is RNA(n+1) + phosphate = RNA(n) + a ribonucleoside 5'-diphosphate. Its function is as follows. Involved in mRNA degradation. Catalyzes the phosphorolysis of single-stranded polyribonucleotides processively in the 3'- to 5'-direction. This is Polyribonucleotide nucleotidyltransferase from Variovorax paradoxus (strain S110).